Here is a 318-residue protein sequence, read N- to C-terminus: D-alanine--D-alanine ligase B (318 aa).

The 199-residue stretch at 117–315 (KQVWLSLGLS…FEALVWRVLE (199 aa)) folds into the ATP-grasp domain. 146 to 201 (AEQIGLPVIVKPANEGSSVGVSRVFDQAQLDEAVTLAARYDGALLMEQLIEGDELT) serves as a coordination point for ATP. Residues Asp-268, Glu-282, and Asn-284 each contribute to the Mg(2+) site.

This sequence belongs to the D-alanine--D-alanine ligase family. The cofactor is Mg(2+). Requires Mn(2+) as cofactor.

The protein resides in the cytoplasm. It carries out the reaction 2 D-alanine + ATP = D-alanyl-D-alanine + ADP + phosphate + H(+). It participates in cell wall biogenesis; peptidoglycan biosynthesis. Its function is as follows. Cell wall formation. The polypeptide is D-alanine--D-alanine ligase B (Xanthomonas campestris pv. campestris (strain ATCC 33913 / DSM 3586 / NCPPB 528 / LMG 568 / P 25)).